Here is a 1240-residue protein sequence, read N- to C-terminus: Protein MMS22-like (1240 aa).

A compositionally biased stretch (polar residues) spans 1–11; sequence MESEFSQSLTP. The disordered stretch occupies residues 1–26; sequence MESEFSQSLTPPVSPSALNHYGESAP.

This sequence belongs to the MMS22 family. MMS22L subfamily. In terms of assembly, component of the MMS22L-TONSL complex.

It localises to the nucleus. The protein resides in the chromosome. In terms of biological role, component of the MMS22L-TONSL complex, a complex that promotes homologous recombination-mediated repair of double-strand breaks (DSBs) at stalled or collapsed replication forks. The MMS22L-TONSL complex is required to maintain genome integrity during DNA replication. It mediates the assembly of RAD51 filaments on single-stranded DNA (ssDNA): the MMS22L-TONSL complex is recruited to DSBs following histone replacement by histone chaperones and eviction of the replication protein A complex (RPA/RP-A) from DSBs. Following recruitment to DSBs, the TONSL-MMS22L complex promotes recruitment of RAD51 filaments and subsequent homologous recombination. Within the complex, MMS22L acts by binding ssDNA. The sequence is that of Protein MMS22-like (mms22l) from Danio rerio (Zebrafish).